We begin with the raw amino-acid sequence, 120 residues long: Membrane-anchored ubiquitin-fold protein 4 (120 aa).

Residues 7–73 (VELKFRLYDG…LENGKTVAQC (67 aa)) enclose the Ubiquitin-like domain. Residue Cys-115 is the site of S-palmitoyl cysteine attachment. A Cysteine methyl ester modification is found at Cys-117. The S-farnesyl cysteine moiety is linked to residue Cys-117. The propeptide at 118 to 120 (TIM) is removed in mature form.

Ubiquitous.

It localises to the cell membrane. In terms of biological role, may serve as docking site to facilitate the association of other proteins to the plasma membrane. The chain is Membrane-anchored ubiquitin-fold protein 4 (MUB4) from Arabidopsis thaliana (Mouse-ear cress).